Consider the following 152-residue polypeptide: uncharacterized protein (152 aa).

The chain crosses the membrane as a helical span at residues 7-27; sequence TLSVIVFLISLIIIFGIYFSS.

The protein localises to the membrane. This is an uncharacterized protein from Methanocaldococcus jannaschii (strain ATCC 43067 / DSM 2661 / JAL-1 / JCM 10045 / NBRC 100440) (Methanococcus jannaschii).